A 164-amino-acid chain; its full sequence is NADH-quinone oxidoreductase subunit I (164 aa).

4Fe-4S ferredoxin-type domains lie at 55–85 (LRRYPNGEERCIACKLCEAICPAQAITIDAE) and 95–124 (TRYDIDMTKCIYCGFCQEACPVDAIVEGPN). 8 residues coordinate [4Fe-4S] cluster: cysteine 65, cysteine 68, cysteine 71, cysteine 75, cysteine 104, cysteine 107, cysteine 110, and cysteine 114.

The protein belongs to the complex I 23 kDa subunit family. As to quaternary structure, NDH-1 is composed of 14 different subunits. Subunits NuoA, H, J, K, L, M, N constitute the membrane sector of the complex. Requires [4Fe-4S] cluster as cofactor.

The protein resides in the cell inner membrane. The catalysed reaction is a quinone + NADH + 5 H(+)(in) = a quinol + NAD(+) + 4 H(+)(out). Its function is as follows. NDH-1 shuttles electrons from NADH, via FMN and iron-sulfur (Fe-S) centers, to quinones in the respiratory chain. The immediate electron acceptor for the enzyme in this species is believed to be ubiquinone. Couples the redox reaction to proton translocation (for every two electrons transferred, four hydrogen ions are translocated across the cytoplasmic membrane), and thus conserves the redox energy in a proton gradient. The polypeptide is NADH-quinone oxidoreductase subunit I (Dinoroseobacter shibae (strain DSM 16493 / NCIMB 14021 / DFL 12)).